Here is a 449-residue protein sequence, read N- to C-terminus: Elongation factor 1-alpha C (449 aa).

A tr-type G domain is found at 5–234 (KQHVSIVVIG…DACDPPKRPV (230 aa)). A G1 region spans residues 14–21 (GHVDSGKS). 14 to 21 (GHVDSGKS) lines the GTP pocket. Residue lysine 55 is modified to N6,N6-dimethyllysine. The segment at 70–74 (GITID) is G2. Lysine 79 carries the post-translational modification N6,N6,N6-trimethyllysine. A G3 region spans residues 91–94 (DAPG). Residues 91-95 (DAPGH) and 153-156 (NKMD) contribute to the GTP site. Residues 153–156 (NKMD) form a G4 region. Residue lysine 187 is modified to N6,N6,N6-trimethyllysine. The interval 194–196 (SGW) is G5. Lysine 265 carries the post-translational modification N6-methyllysine. N6,N6,N6-trimethyllysine is present on residues lysine 310 and lysine 400.

This sequence belongs to the TRAFAC class translation factor GTPase superfamily. Classic translation factor GTPase family. EF-Tu/EF-1A subfamily.

It localises to the cytoplasm. Functionally, this protein promotes the GTP-dependent binding of aminoacyl-tRNA to the A-site of ribosomes during protein biosynthesis. The chain is Elongation factor 1-alpha C (TEF-C) from Porphyra purpurea (Red seaweed).